A 267-amino-acid chain; its full sequence is Electron transfer flavoprotein subunit beta (267 aa).

The protein belongs to the ETF beta-subunit/FixA family. In terms of assembly, heterodimer of an alpha and a beta subunit.

Functionally, participates in the electron transfer process during N,N-dimethylglycine (DMG) degradation to sarcosine. In Chromohalobacter salexigens (strain ATCC BAA-138 / DSM 3043 / CIP 106854 / NCIMB 13768 / 1H11), this protein is Electron transfer flavoprotein subunit beta.